The sequence spans 630 residues: tRNA uridine 5-carboxymethylaminomethyl modification enzyme MnmG (630 aa).

13 to 18 (GGGHAG) is a binding site for FAD. 273 to 287 (GPRYCPSIEDKIHRF) is an NAD(+) binding site.

This sequence belongs to the MnmG family. In terms of assembly, homodimer. Heterotetramer of two MnmE and two MnmG subunits. The cofactor is FAD.

It is found in the cytoplasm. Functionally, NAD-binding protein involved in the addition of a carboxymethylaminomethyl (cmnm) group at the wobble position (U34) of certain tRNAs, forming tRNA-cmnm(5)s(2)U34. The protein is tRNA uridine 5-carboxymethylaminomethyl modification enzyme MnmG of Pseudomonas putida (strain GB-1).